The sequence spans 488 residues: NADH-quinone oxidoreductase subunit N (488 aa).

The next 14 helical transmembrane spans lie at 15 to 35 (LALP…VDLY), 42 to 62 (GMTF…AIVA), 79 to 99 (NLAA…FAYC), 108 to 128 (LLKG…MIMA), 133 to 153 (LMTV…MVAF), 168 to 188 (FVLG…IYGA), 209 to 229 (WLLL…FGAV), 243 to 263 (PTTV…ALFV), 277 to 297 (WQPM…LAAL), 305 to 325 (MLAY…IAGT), 333 to 353 (LFYA…IILL), 376 to 396 (MALM…TVGF), 409 to 429 (VGLV…AFYY), and 456 to 476 (GLLV…DSLI).

The protein belongs to the complex I subunit 2 family. As to quaternary structure, NDH-1 is composed of 14 different subunits. Subunits NuoA, H, J, K, L, M, N constitute the membrane sector of the complex.

The protein resides in the cell inner membrane. The catalysed reaction is a quinone + NADH + 5 H(+)(in) = a quinol + NAD(+) + 4 H(+)(out). Functionally, NDH-1 shuttles electrons from NADH, via FMN and iron-sulfur (Fe-S) centers, to quinones in the respiratory chain. The immediate electron acceptor for the enzyme in this species is believed to be ubiquinone. Couples the redox reaction to proton translocation (for every two electrons transferred, four hydrogen ions are translocated across the cytoplasmic membrane), and thus conserves the redox energy in a proton gradient. The sequence is that of NADH-quinone oxidoreductase subunit N from Alkalilimnicola ehrlichii (strain ATCC BAA-1101 / DSM 17681 / MLHE-1).